Reading from the N-terminus, the 67-residue chain is DNA-directed RNA polymerase subunit omega (67 aa).

Belongs to the RNA polymerase subunit omega family. As to quaternary structure, the RNAP catalytic core consists of 2 alpha, 1 beta, 1 beta' and 1 omega subunit. When a sigma factor is associated with the core the holoenzyme is formed, which can initiate transcription.

The catalysed reaction is RNA(n) + a ribonucleoside 5'-triphosphate = RNA(n+1) + diphosphate. Functionally, promotes RNA polymerase assembly. Latches the N- and C-terminal regions of the beta' subunit thereby facilitating its interaction with the beta and alpha subunits. The chain is DNA-directed RNA polymerase subunit omega from Burkholderia ambifaria (strain MC40-6).